Consider the following 220-residue polypeptide: Translation initiation factor 6 (220 aa).

Belongs to the eIF-6 family.

Its function is as follows. Binds to the 50S ribosomal subunit and prevents its association with the 30S ribosomal subunit to form the 70S initiation complex. This Methanoculleus marisnigri (strain ATCC 35101 / DSM 1498 / JR1) protein is Translation initiation factor 6.